The primary structure comprises 83 residues: Small ribosomal subunit protein uS17 (83 aa).

This sequence belongs to the universal ribosomal protein uS17 family. In terms of assembly, part of the 30S ribosomal subunit.

In terms of biological role, one of the primary rRNA binding proteins, it binds specifically to the 5'-end of 16S ribosomal RNA. The polypeptide is Small ribosomal subunit protein uS17 (Ehrlichia canis (strain Jake)).